We begin with the raw amino-acid sequence, 813 residues long: LPS-assembly protein LptD (813 aa).

The first 22 residues, 1-22 (MRRALRLLPLPLSIAICLPAMA), serve as a signal peptide directing secretion.

The protein belongs to the LptD family. In terms of assembly, component of the lipopolysaccharide transport and assembly complex. Interacts with LptE and LptA.

The protein localises to the cell outer membrane. In terms of biological role, together with LptE, is involved in the assembly of lipopolysaccharide (LPS) at the surface of the outer membrane. The protein is LPS-assembly protein LptD of Xanthomonas oryzae pv. oryzae (strain MAFF 311018).